The following is a 110-amino-acid chain: Chloride intracellular channel protein 1 (110 aa).

Position 2 is an N-acetylalanine (A2). Residues 2 to 90 (AEEQPQVELF…EEFLEAVLCP (89 aa)) form a required for insertion into the membrane region. N6-acetyllysine is present on K13. Residues 24–27 (CPFS) carry the G-site motif. An intrachain disulfide couples C24 to C59. A helical transmembrane segment spans residues 26–46 (FSQRLFMVLWLKGVTFNVTTV).

This sequence belongs to the chloride channel CLIC family. In terms of assembly, monomer. Homodimer (in vitro). Interacts with TRAPPC2. Dimerization requires a conformation change that leads to the exposure of a large hydrophobic surface. In vivo, this may lead to membrane insertion.

The protein resides in the nucleus. Its subcellular location is the nucleus membrane. It is found in the cytoplasm. The protein localises to the cell membrane. It localises to the endoplasmic reticulum. It carries out the reaction L-dehydroascorbate + 2 glutathione = glutathione disulfide + L-ascorbate. The enzyme catalyses chloride(in) = chloride(out). The catalysed reaction is iodide(out) = iodide(in). It catalyses the reaction thiocyanate(in) = thiocyanate(out). It carries out the reaction nitrate(in) = nitrate(out). The enzyme catalyses bromide(in) = bromide(out). The catalysed reaction is fluoride(in) = fluoride(out). In terms of biological role, in the soluble state, catalyzes glutaredoxin-like thiol disulfide exchange reactions with reduced glutathione as electron donor. Reduces selenite and dehydroascorbate and may act as an antioxidant during oxidative stress response. Can insert into membranes and form voltage-dependent multi-ion conductive channels. Membrane insertion seems to be redox-regulated and may occur only under oxidizing conditions. Involved in regulation of the cell cycle. The polypeptide is Chloride intracellular channel protein 1 (CLIC1) (Sus scrofa (Pig)).